The primary structure comprises 283 residues: Probable endonuclease 4 (283 aa).

Residues His-67, His-107, Glu-144, Asp-178, His-181, His-215, Asp-228, His-230, and Glu-260 each coordinate Zn(2+).

Belongs to the AP endonuclease 2 family. Zn(2+) is required as a cofactor.

The enzyme catalyses Endonucleolytic cleavage to 5'-phosphooligonucleotide end-products.. In terms of biological role, endonuclease IV plays a role in DNA repair. It cleaves phosphodiester bonds at apurinic or apyrimidinic (AP) sites, generating a 3'-hydroxyl group and a 5'-terminal sugar phosphate. This chain is Probable endonuclease 4, found in Geobacter sp. (strain M21).